Consider the following 365-residue polypeptide: Heat-inducible transcription repressor HrcA (365 aa).

Belongs to the HrcA family.

In terms of biological role, negative regulator of class I heat shock genes (grpE-dnaK-dnaJ and groELS operons). Prevents heat-shock induction of these operons. This is Heat-inducible transcription repressor HrcA from Trichormus variabilis (strain ATCC 29413 / PCC 7937) (Anabaena variabilis).